The chain runs to 349 residues: N-acetyl-gamma-glutamyl-phosphate reductase (349 aa).

Residue C149 is part of the active site.

The protein belongs to the NAGSA dehydrogenase family. Type 1 subfamily.

Its subcellular location is the cytoplasm. The catalysed reaction is N-acetyl-L-glutamate 5-semialdehyde + phosphate + NADP(+) = N-acetyl-L-glutamyl 5-phosphate + NADPH + H(+). The protein operates within amino-acid biosynthesis; L-arginine biosynthesis; N(2)-acetyl-L-ornithine from L-glutamate: step 3/4. In terms of biological role, catalyzes the NADPH-dependent reduction of N-acetyl-5-glutamyl phosphate to yield N-acetyl-L-glutamate 5-semialdehyde. The polypeptide is N-acetyl-gamma-glutamyl-phosphate reductase (Acinetobacter baumannii (strain ACICU)).